We begin with the raw amino-acid sequence, 476 residues long: Serine/threonine-protein kinase chk-2 (476 aa).

In terms of domain architecture, FHA spans 66–127 (FVCGRGSDDA…NGTLVNQEMI (62 aa)). The 267-residue stretch at 170–436 (HVTSHSLGKG…AVELMSTQWM (267 aa)) folds into the Protein kinase domain. ATP-binding positions include 177 to 184 (GKGGFGKV), lysine 199, and 252 to 258 (EYVGGGE). Aspartate 301 functions as the Proton acceptor in the catalytic mechanism. ATP contacts are provided by residues 305–306 (EN) and aspartate 322.

It belongs to the protein kinase superfamily. CAMK Ser/Thr protein kinase family. CHK2 subfamily. Requires Mg(2+) as cofactor. Highly expressed in germline tissue.

The protein resides in the nucleus. It carries out the reaction L-seryl-[protein] + ATP = O-phospho-L-seryl-[protein] + ADP + H(+). The catalysed reaction is L-threonyl-[protein] + ATP = O-phospho-L-threonyl-[protein] + ADP + H(+). Functionally, serine/threonine-protein kinase which is required for checkpoint-mediated cell cycle arrest, activation of DNA repair and apoptosis in response to the presence of DNA double-strand breaks. May also negatively regulate cell cycle progression during unperturbed cell cycles. Phosphorylates and inhibits cdc25 phosphatase, preventing entry into mitosis. Required for nuclear reorganization and homologous chromosome pairing during meiotic prophase. In Caenorhabditis elegans, this protein is Serine/threonine-protein kinase chk-2 (chk-2).